We begin with the raw amino-acid sequence, 190 residues long: Dynein axonemal light chain 1 (190 aa).

A2 carries the N-acetylalanine modification. 4 LRR repeats span residues 49–70, 71–92, 94–115, and 116–137; these read NCEK…NGLK, NLRI…EAVG, TLEE…HVMK, and KLKI…LKLA. At S56 the chain carries Phosphoserine. The 41-residue stretch at 150–190 folds into the LRRCT domain; it reads NPLEEKHSAEGNWIDEATKRVPKLKKLDGTPVIKEDEEEES.

This sequence belongs to the dynein light chain LC1-type family. In terms of assembly, interacts with ZMYND10 (via C-terminus). Interacts with DNAH5, a outer arm dynein heavy chain. Interacts with tubulin located within the A-tubule of the outer doublets in a ATP-independent manner. As to expression, expressed in the respiratory epithelium of the upper airways and the ependymal cells lining the brain ventricles.

Its subcellular location is the cytoplasm. It localises to the cytoskeleton. It is found in the cilium axoneme. Part of the multisubunit axonemal ATPase complexes that generate the force for cilia motility and govern beat frequency. Component of the outer arm dynein (ODA). May be involved in a mechanosensory feedback mechanism controlling ODA activity based on external conformational cues by tethering the outer arm dynein heavy chain (DNAH5) to the microtubule within the axoneme. Important for ciliary function in the airways and for the function of the cilia that produce the nodal flow essential for the determination of the left-right asymmetry. The chain is Dynein axonemal light chain 1 (Dnal1) from Mus musculus (Mouse).